The chain runs to 624 residues: Laccase-1 (624 aa).

The signal sequence occupies residues 1 to 20 (MRGLAKLFFLSCSFVSLVSS). Plastocyanin-like domains follow at residues 72-183 (FASP…HSPN) and 195-343 (DRIV…CMFG). Cu cation is bound by residues His-117 and His-119. Cysteines 138 and 578 form a disulfide. The N-linked (GlcNAc...) asparagine glycan is linked to Asn-149. Cu cation contacts are provided by His-162 and His-164. Asn-242 and Asn-430 each carry an N-linked (GlcNAc...) asparagine glycan. Positions 469-562 (IIINNLDTVI…GKLAVIVVQP (94 aa)) constitute a Plastocyanin-like 3 domain. 3 residues coordinate Cu cation: His-480, His-483, and His-485. N-linked (GlcNAc...) asparagine glycosylation is present at Asn-503. Residues His-543, Cys-544, His-545, and His-549 each coordinate Cu cation. Positions 579 to 604 (ANTDPNAFGPAKRSSSPSIQSSKTSS) are disordered. Residues 592-604 (SSSPSIQSSKTSS) show a composition bias toward low complexity.

It belongs to the multicopper oxidase family. It depends on Cu cation as a cofactor.

Its subcellular location is the secreted. It is found in the cell wall. It carries out the reaction 4 hydroquinone + O2 = 4 benzosemiquinone + 2 H2O. Laccase that catalyzes the oxidation of certain aromatic compounds, including L-dopa, to quinones, which then polymerize to melanin. Able to oxidize a wide variety of aromatic diphenol and diamino groups in the ortho, meta, and para positions but not monophenolic groups such as in phenol, tyramine, or tyrosine. Plays an important role in virulence. Plays a role in dissemination to extrapulmonary sites but is not involved in pulmonary growth or in elicitation of cellular immune responses in the lung. This is Laccase-1 from Cryptococcus neoformans var. neoformans serotype D (strain B-3501A) (Filobasidiella neoformans).